The sequence spans 305 residues: Large ribosomal subunit protein uL10 (305 aa).

It belongs to the universal ribosomal protein uL10 family. In terms of assembly, P0 forms a pentameric complex by interaction with dimers of P1 and P2. Phosphorylated.

Its function is as follows. Ribosomal protein P0 is the functional equivalent of E.coli protein L10. The chain is Large ribosomal subunit protein uL10 (rplp0) from Dictyostelium discoideum (Social amoeba).